A 296-amino-acid chain; its full sequence is Bifunctional protein FolD (296 aa).

NADP(+) is bound by residues 166–168 (GRS), Ser-195, and Thr-236.

Belongs to the tetrahydrofolate dehydrogenase/cyclohydrolase family. In terms of assembly, homodimer.

It catalyses the reaction (6R)-5,10-methylene-5,6,7,8-tetrahydrofolate + NADP(+) = (6R)-5,10-methenyltetrahydrofolate + NADPH. The enzyme catalyses (6R)-5,10-methenyltetrahydrofolate + H2O = (6R)-10-formyltetrahydrofolate + H(+). It functions in the pathway one-carbon metabolism; tetrahydrofolate interconversion. In terms of biological role, catalyzes the oxidation of 5,10-methylenetetrahydrofolate to 5,10-methenyltetrahydrofolate and then the hydrolysis of 5,10-methenyltetrahydrofolate to 10-formyltetrahydrofolate. The sequence is that of Bifunctional protein FolD from Dehalococcoides mccartyi (strain ATCC BAA-2100 / JCM 16839 / KCTC 5957 / BAV1).